Consider the following 1037-residue polypeptide: Presequence protease, mitochondrial (1037 aa).

The transit peptide at 1–15 (MWRCGGRQGLGVLRR) directs the protein to the mitochondrion. Residue histidine 104 participates in Zn(2+) binding. The active-site Proton acceptor is glutamate 107. The Zn(2+) site is built by histidine 108 and glutamate 205. A disulfide bridge connects residues cysteine 119 and cysteine 556. Lysine 759 is subject to N6-acetyllysine. Position 770 is an N6-acetyllysine; alternate (lysine 770). Lysine 770 carries the post-translational modification N6-succinyllysine; alternate. Positions 803–834 (IGRSKKERRPVRPHTVEKPVPSSSGGDAHVPH) are disordered. Positions 804 to 814 (GRSKKERRPVR) are enriched in basic residues. Lysine 849 is subject to N6-succinyllysine. Lysine 884 is modified (N6-acetyllysine). Lysine 946 is modified (N6-succinyllysine).

This sequence belongs to the peptidase M16 family. PreP subfamily. As to quaternary structure, monomer and homodimer; homodimerization is induced by binding of the substrate. Requires Zn(2+) as cofactor. In terms of processing, a disulfide bond locks the enzyme in the closed conformation preventing substrate entry into the catalytic chamber.

The protein localises to the mitochondrion matrix. With respect to regulation, mainly exists in a closed and catalytically competent conformation but a closed-to-open switch allows substrate entry into the catalytic chamber. Substrate binding induces closure and dimerization. A disulfide bond may lock the enzyme in a closed conformation preventing substrate entry into the catalytic chamber, participating in redox regulation of the enzyme. Inhibited by metal-chelating agents. Inhibited by nickel and zinc excess, and slightly activated by manganese. In terms of biological role, metalloendopeptidase of the mitochondrial matrix that functions in peptide cleavage and degradation rather than in protein processing. Has an ATP-independent activity. Specifically cleaves peptides in the range of 5 to 65 residues. Shows a preference for cleavage after small polar residues and before basic residues, but without any positional preference. Degrades the transit peptides of mitochondrial proteins after their cleavage. Also degrades other unstructured peptides. It is also able to degrade amyloid-beta protein 40, one of the peptides produced by APP processing, when it accumulates in mitochondrion. It is a highly efficient protease, at least toward amyloid-beta protein 40. Cleaves that peptide at a specific position and is probably not processive, releasing digested peptides intermediates that can be further cleaved subsequently. It is also able to degrade amyloid-beta protein 42. This is Presequence protease, mitochondrial from Pongo abelii (Sumatran orangutan).